We begin with the raw amino-acid sequence, 125 residues long: uncharacterized protein (125 aa).

The protein localises to the mitochondrion. This is an uncharacterized protein from Paramecium tetraurelia.